A 215-amino-acid polypeptide reads, in one-letter code: Cytochrome b6 (215 aa).

A helical membrane pass occupies residues 32-52 (IFYCLGGITLTCFLVQVATGF). C35 contributes to the heme c binding site. Heme b is bound by residues H86 and H100. Transmembrane regions (helical) follow at residues 90–110 (ASMM…TGGF), 116–136 (LTWV…VTGY), and 186–206 (LHTF…FLMI). H187 and H202 together coordinate heme b.

The protein belongs to the cytochrome b family. PetB subfamily. As to quaternary structure, the 4 large subunits of the cytochrome b6-f complex are cytochrome b6, subunit IV (17 kDa polypeptide, PetD), cytochrome f and the Rieske protein, while the 4 small subunits are PetG, PetL, PetM and PetN. The complex functions as a dimer. The cofactor is heme b. Heme c is required as a cofactor.

It localises to the plastid. The protein localises to the chloroplast thylakoid membrane. Its function is as follows. Component of the cytochrome b6-f complex, which mediates electron transfer between photosystem II (PSII) and photosystem I (PSI), cyclic electron flow around PSI, and state transitions. In Morus indica (Mulberry), this protein is Cytochrome b6.